The primary structure comprises 119 residues: NADH-quinone oxidoreductase subunit A (119 aa).

The next 3 membrane-spanning stretches (helical) occupy residues 7 to 27, 63 to 83, and 88 to 108; these read YPVL…VSIG, LVAI…PWGV, and IGWP…LGFA.

This sequence belongs to the complex I subunit 3 family. NDH-1 is composed of 14 different subunits. Subunits NuoA, H, J, K, L, M, N constitute the membrane sector of the complex.

The protein resides in the cell inner membrane. It catalyses the reaction a quinone + NADH + 5 H(+)(in) = a quinol + NAD(+) + 4 H(+)(out). Its function is as follows. NDH-1 shuttles electrons from NADH, via FMN and iron-sulfur (Fe-S) centers, to quinones in the respiratory chain. The immediate electron acceptor for the enzyme in this species is believed to be ubiquinone. Couples the redox reaction to proton translocation (for every two electrons transferred, four hydrogen ions are translocated across the cytoplasmic membrane), and thus conserves the redox energy in a proton gradient. This chain is NADH-quinone oxidoreductase subunit A, found in Burkholderia vietnamiensis (strain G4 / LMG 22486) (Burkholderia cepacia (strain R1808)).